The following is a 213-amino-acid chain: GTP cyclohydrolase 1 (213 aa).

3 residues coordinate Zn(2+): cysteine 104, histidine 107, and cysteine 175.

This sequence belongs to the GTP cyclohydrolase I family. In terms of assembly, homomer.

The catalysed reaction is GTP + H2O = 7,8-dihydroneopterin 3'-triphosphate + formate + H(+). The protein operates within cofactor biosynthesis; 7,8-dihydroneopterin triphosphate biosynthesis; 7,8-dihydroneopterin triphosphate from GTP: step 1/1. This is GTP cyclohydrolase 1 from Brucella canis (strain ATCC 23365 / NCTC 10854 / RM-666).